The chain runs to 403 residues: Cytoplasmic tRNA 2-thiolation protein 2 (403 aa).

It belongs to the CTU2/NCS2 family.

The protein resides in the cytoplasm. It functions in the pathway tRNA modification; 5-methoxycarbonylmethyl-2-thiouridine-tRNA biosynthesis. Functionally, plays a central role in 2-thiolation of mcm(5)S(2)U at tRNA wobble positions of tRNA(Lys), tRNA(Glu) and tRNA(Gln). May act by forming a heterodimer with NCS6/CTU1 that ligates sulfur from thiocarboxylated URM1 onto the uridine of tRNAs at wobble position. This Drosophila ananassae (Fruit fly) protein is Cytoplasmic tRNA 2-thiolation protein 2.